Reading from the N-terminus, the 586-residue chain is CTP synthase (586 aa).

Residues 1-265 form an amidoligase domain region; sequence MVRFIFVTGG…ENKVLNFFNI (265 aa). Residue Ser-13 participates in CTP binding. Residue Ser-13 coordinates UTP. ATP-binding positions include 14–19 and Asp-71; that span reads SLGKGI. Mg(2+) is bound by residues Asp-71 and Glu-139. CTP contacts are provided by residues 146–148, 186–191, and Lys-222; these read DIE and KTKPTQ. Residues 186 to 191 and Lys-222 each bind UTP; that span reads KTKPTQ. Residues 290–582 form the Glutamine amidotransferase type-1 domain; the sequence is KIAIITKYHK…IKATIEYNKS (293 aa). Gly-352 lines the L-glutamine pocket. The Nucleophile; for glutamine hydrolysis role is filled by Cys-379. L-glutamine-binding positions include 380 to 383 and Glu-403; that span reads FGMQ. The region spanning 429-473 is the RPE1 insert domain; that stretch reads AHISKCTYSEAFECDASTVYTNIHEDSNNLSTDKLQIETNFRNMS. L-glutamine is bound at residue Arg-510. Active-site residues include His-555 and Glu-557.

This sequence belongs to the CTP synthase family. Homotetramer.

The enzyme catalyses UTP + L-glutamine + ATP + H2O = CTP + L-glutamate + ADP + phosphate + 2 H(+). The catalysed reaction is L-glutamine + H2O = L-glutamate + NH4(+). It catalyses the reaction UTP + NH4(+) + ATP = CTP + ADP + phosphate + 2 H(+). Its pathway is pyrimidine metabolism; CTP biosynthesis via de novo pathway; CTP from UDP: step 2/2. Allosterically activated by GTP, when glutamine is the substrate; GTP has no effect on the reaction when ammonia is the substrate. The allosteric effector GTP functions by stabilizing the protein conformation that binds the tetrahedral intermediate(s) formed during glutamine hydrolysis. Inhibited by the product CTP, via allosteric rather than competitive inhibition. In terms of biological role, catalyzes the ATP-dependent amination of UTP to CTP with either L-glutamine or ammonia as the source of nitrogen. Regulates intracellular CTP levels through interactions with the four ribonucleotide triphosphates. This chain is CTP synthase, found in Rickettsia prowazekii (strain Madrid E).